The following is a 188-amino-acid chain: MSETPSKQTAASDETGAVVAPEPGPVSQWLNKQGFDHNILEPDHLGVEQIGVDAAVLPMIAAALKSNGFDYLQCQGGYDEGPGEQLVCFYHLLAMAEQVEAMVADPSAKLREVRIKVFLNREGTPSLPSIYGLFRGADWQERETFDMYGIQFEGHPHPKRLLMPEDWKGWPLRKDYVQPDFYEMQDAY.

The segment covering 1–12 has biased composition (polar residues); sequence MSETPSKQTAAS. The disordered stretch occupies residues 1-23; that stretch reads MSETPSKQTAASDETGAVVAPEP.

Belongs to the complex I 30 kDa subunit family. In terms of assembly, NDH-1 can be composed of about 15 different subunits; different subcomplexes with different compositions have been identified which probably have different functions.

It is found in the cellular thylakoid membrane. It catalyses the reaction a plastoquinone + NADH + (n+1) H(+)(in) = a plastoquinol + NAD(+) + n H(+)(out). The catalysed reaction is a plastoquinone + NADPH + (n+1) H(+)(in) = a plastoquinol + NADP(+) + n H(+)(out). NDH-1 shuttles electrons from an unknown electron donor, via FMN and iron-sulfur (Fe-S) centers, to quinones in the respiratory and/or the photosynthetic chain. The immediate electron acceptor for the enzyme in this species is believed to be plastoquinone. Couples the redox reaction to proton translocation, and thus conserves the redox energy in a proton gradient. Cyanobacterial NDH-1 also plays a role in inorganic carbon-concentration. The protein is NAD(P)H-quinone oxidoreductase subunit J of Synechococcus sp. (strain CC9605).